We begin with the raw amino-acid sequence, 727 residues long: Glycerol-3-phosphate dehydrogenase, mitochondrial (727 aa).

A mitochondrion-targeting transit peptide spans 1-42; that stretch reads MAFQKAVKGTILVGGGALATVLGLSPFAHYRRKQVSLAYVEA. Residue 71–99 coordinates FAD; it reads DILVIGGGATGCGCALDAVTRGLKTALVE. At tyrosine 601 the chain carries Phosphotyrosine. 2 EF-hand domains span residues 623–658 and 659–694; these read SDID…INVQ and MDEN…VQKG. 5 residues coordinate Ca(2+): aspartate 672, asparagine 674, asparagine 676, glutamine 678, and glutamate 683.

This sequence belongs to the FAD-dependent glycerol-3-phosphate dehydrogenase family. Requires FAD as cofactor.

The protein localises to the mitochondrion inner membrane. The enzyme catalyses a quinone + sn-glycerol 3-phosphate = dihydroxyacetone phosphate + a quinol. The protein operates within polyol metabolism; glycerol degradation via glycerol kinase pathway; glycerone phosphate from sn-glycerol 3-phosphate (anaerobic route): step 1/1. Calcium-binding enhance the activity of the enzyme. Its function is as follows. Calcium-responsive mitochondrial glycerol-3-phosphate dehydrogenase which seems to be a key component of the pancreatic beta-cell glucose-sensing device. This is Glycerol-3-phosphate dehydrogenase, mitochondrial from Mus musculus (Mouse).